The sequence spans 319 residues: Thiamine pyrophosphokinase (319 aa).

Position 2 is an N-acetylserine (Ser2).

The protein belongs to the thiamine pyrophosphokinase family. In terms of assembly, homodimer.

It catalyses the reaction thiamine + ATP = thiamine diphosphate + AMP + H(+). It participates in cofactor biosynthesis; thiamine diphosphate biosynthesis; thiamine diphosphate from thiamine: step 1/1. Its function is as follows. Essential protein, it is the only enzyme in yeast capable of synthesizing thiamine pyrophosphate (TPP). The chain is Thiamine pyrophosphokinase from Saccharomyces cerevisiae (strain ATCC 204508 / S288c) (Baker's yeast).